The chain runs to 71 residues: MNVSIPHSFTMTLKEINRSIIYSTTNSVISALLMYNLLTIISTTYLSVSFRRVMFGFNSPKHTNSKLILTD.

This is an uncharacterized protein from Homo sapiens (Human).